Consider the following 441-residue polypeptide: MGTTSPNSEKRQITDINERRKLQNRVAQRKYRTRQKTRMKLAEAVLNDYTYIHPTLGTIQSKKKSPLTMECDRSSASYPDLSSYAEICSETRSETQATRARQLTSQRTCFRESVDNNQADSHAQLSRCLNRQEMFYGISGETEFSEGDTRDRVECIDPNLTRGWLDMDLRSGTPNSSTVVDCGLCTVGANSQPPTRTNVQEAIETLELFEPNDQRKTENLPREPCGSCPSSSHGYSPTSGNPSTLLLTPSESLMNSVIVTSDSPLLAADDKSPGDLVISEANTHGPKEDQFSPLMTAISLGRLDIARILLQSGAPLDIPDDSGKTALHRAVGRRELHMVEALLNLGAEMLATDHEGNSLLHIAVKTNSLSITRLLLERYKSCRELKDAQLGHGCRQHGNQVHSESWIDLRNREGMTAVHLSVIFNRPEILQLLVKYSANVN.

A basic DNA-binding region region spans residues 14–40; sequence TDINERRKLQNRVAQRKYRTRQKTRMK. The segment at 209-243 is disordered; sequence FEPNDQRKTENLPREPCGSCPSSSHGYSPTSGNPS. The span at 212–221 shows a compositional bias: basic and acidic residues; that stretch reads NDQRKTENLP. Residues 228–241 are compositionally biased toward polar residues; it reads CPSSSHGYSPTSGN. 4 ANK repeats span residues 289 to 318, 322 to 351, 355 to 384, and 413 to 440; these read DQFSPLMTAISLGRLDIARILLQSGAPLDI, SGKTALHRAVGRRELHMVEALLNLGAEMLA, EGNSLLHIAVKTNSLSITRLLLERYKSCRE, and EGMTAVHLSVIFNRPEILQLLVKYSANV.

Belongs to the bZIP family. In terms of assembly, monomer.

It localises to the nucleus. In terms of biological role, transcription factor, part of the diffuse TOX2 gene cluster that mediates the biosynthesis of the HC-toxin, cyclic tetrapeptide of structure cyclo(D-Pro-L-Ala-D-Ala-L-Aeo), where Aeo stands for 2-amino-9,10-epoxi-8-oxodecanoic acid. HC-toxin is a determinant of specificity and virulence in the interaction between the producing fungus and its host, maize. TOXE is a pathway-specific transcription factor which coordinates the expression of genes involved in HC-toxin biosynthesis. Binds to the tox-box, a 10-bp motif with the consensus 5'-ATCTCNCGNA-3', which is found in the promoter of all genes involved in HC-toxin biosynthesis. Required for pathogenicity of the fungus on maize. This chain is Transcription factor TOXE, found in Cochliobolus carbonum (Maize leaf spot fungus).